The primary structure comprises 1188 residues: MALVPSPRAGGFLPAETHSGPQPPRRRVRQSTAGAAPTATRAPRRRAATASPGEPPSTTASGRPPAANNVSLTPNSRLRGTIVAPRGQGLLYAIDTATNSPMEIKFHRRLASALTRLLQVNLRSVPADLNEAFLDSLDSSQIRTLALKLKVPRVEVWTCGSRGVVVPSIIHPQQERAGAEEGDEGERQDTEDFLNFPLRFLVRGRQVHLIQEMQSVQRCEYCARFYKYQHECTVRRRDFYFHHINAHSSGWWQKINFFPIGSHPRVERLFVTYDVETYTWMGAFGKQLVPFMLVMHLSGEEALVKEACRLACELQWDTWGNDERTFYVVTPEKLAVGKKFREYRNRLQAHFALQLWRGFLAANPQLAEWACLEMGLFSPDYLTYEELQKAPKLQGRPRFLELYIVGHNINGFDEIVLAAQVINNRSDVPGPFKITRNFMPRAGKILFNDITFALPNPSSKKRTDYRLWEQGACDDSDFKYQFLKVMVRDTFALTHTSLRKAAQAYTLPVEKGCCPYKAVNEFYMLGSYRADERGFPAEDYWKDREEYLLNRELWEKKQCPHYDLVRETLDYCALDVLVTAALVQKLRESYAQFIRDAVGLPEASFNVFQRPTISSNSHAIFRQILYRTVKPQRSDLGGSLLAPSHEMYDYVRASIRGGRCYPTYIGVLREPLYVYDICGMYASALTHPMPWGFPLNPYERALAVRDWEHALLQVGTPIDYFNRTLLPGIFTIDADPPPENLLDVLPPLCSRKGGRLCWTNEPLRGEVVTSVDLITLHNRGWHVRLLPDERATVFPEWRCVAKEYVHLNITAKERADREKNQTLRSIAKLLSNALYGSFATKLDNKKIVFSDQMDSATIKSIAAGQINIKSTSFVETDTLSAEVMPTFQRAYSPEQLAVVHSDAEESDEEPGHAPFYTPTHKPNDHVTYTYKPITFMDAEEDDLCLHTLEKVDPLVENNRYPSQIASFVLAWTRAFVSEWSEILYAEDRGTPLEQRTLKSVYGDTDSLFVTEAGYRLMETRGKKRIKKHGGNLVFDPKHPELAWLVECETVCAQCGADAYSPESVFLAPKLYALKCLRCPSCQQISKGKLRAKGHAAETLNYDLMLKCYLADFQGEDARFHTSRMSLKRTLASAQPGARPFTVTETNLTRTLRPWKDITLAPLDAHRLVPYSQSRPNPRNQEVCWIEMP.

A disordered region spans residues 1–74; the sequence is MALVPSPRAG…PAANNVSLTP (74 aa). The span at 31–41 shows a compositional bias: low complexity; it reads STAGAAPTATR.

This sequence belongs to the DNA polymerase type-B family. In terms of assembly, heterodimer with the terminal protein; this heterodimer binds to bp 9 to 18 of the genome. Forms a complex with viral pTP, DBP and hosts NFIA and POU2F1/OCT1 for initiation of replication.

Its subcellular location is the host nucleus. It catalyses the reaction DNA(n) + a 2'-deoxyribonucleoside 5'-triphosphate = DNA(n+1) + diphosphate. Functionally, eukaryotic-type DNA polymerase involved in viral genomic replication. DNA synthesis is protein primed, and acts in a strand displacement replication. Assembles in complex with viral pTP, DBP, host NFIA and host POU2F1/OCT1 on viral origin of replication. The polymerase covalently transfers dCMP onto pTP, thereby initiating complementary strand synthesis. The polypeptide is DNA polymerase (Human adenovirus F serotype 40 (HAdV-40)).